The sequence spans 742 residues: Two-component response regulator-like PRR37 (742 aa).

A Response regulatory domain is found at lysine 63–tryptophan 181. The span at serine 186–glycine 195 shows a compositional bias: low complexity. 7 disordered regions span residues serine 186–lysine 249, proline 290–asparagine 346, glutamine 377–asparagine 402, methionine 478–arginine 517, phenylalanine 533–glutamine 568, asparagine 590–methionine 671, and asparagine 697–arginine 742. The span at aspartate 236–threonine 248 shows a compositional bias: polar residues. Basic and acidic residues predominate over residues lysine 299–glutamate 313. A compositionally biased stretch (polar residues) spans arginine 318–glutamate 330. Basic and acidic residues predominate over residues arginine 331–glutamate 341. Residues glycine 490–serine 502 are compositionally biased toward low complexity. Residues threonine 503 to serine 512 show a composition bias toward polar residues. Residues asparagine 618–serine 634 show a composition bias toward low complexity. The segment covering glycine 656 to serine 667 has biased composition (gly residues). The 43-residue stretch at arginine 682–glutamine 724 folds into the CCT domain. Residues asparagine 697–lysine 708 show a composition bias toward basic residues. Residues glycine 719–glutamine 731 are compositionally biased toward low complexity.

The protein belongs to the ARR-like family.

It is found in the nucleus. In terms of biological role, probable transcription factor involved in the regulation of flowering time under long day (LD) conditions. Functions as a repressor of flowering. Controls flowering time by negatively regulating the expression of HD3A. Acts downstream of the phytochrome B to repress the expression of EHD1, an activator of the flowering promoter genes HD3A and RFT1. Controls photoperiodic flowering response. Seems to be one of the component of the circadian clock. Expression of several members of the ARR-like family is controlled by circadian rhythm. The particular coordinated sequential expression of PRR73, PRR37, PRR95, PRR59 and PPR1 result to circadian waves that may be at the basis of the endogenous circadian clock. In Oryza sativa subsp. japonica (Rice), this protein is Two-component response regulator-like PRR37.